A 217-amino-acid polypeptide reads, in one-letter code: 3,4-dihydroxy-2-butanone 4-phosphate synthase (217 aa).

D-ribulose 5-phosphate-binding positions include 37 to 38, Asp42, 150 to 154, and Glu174; these read RE and RRGHT. Glu38 is a Mg(2+) binding site. His153 contributes to the Mg(2+) binding site.

The protein belongs to the DHBP synthase family. Homodimer. Mg(2+) serves as cofactor. It depends on Mn(2+) as a cofactor.

It carries out the reaction D-ribulose 5-phosphate = (2S)-2-hydroxy-3-oxobutyl phosphate + formate + H(+). Its pathway is cofactor biosynthesis; riboflavin biosynthesis; 2-hydroxy-3-oxobutyl phosphate from D-ribulose 5-phosphate: step 1/1. Catalyzes the conversion of D-ribulose 5-phosphate to formate and 3,4-dihydroxy-2-butanone 4-phosphate. This chain is 3,4-dihydroxy-2-butanone 4-phosphate synthase, found in Shewanella baltica (strain OS155 / ATCC BAA-1091).